The chain runs to 487 residues: mRNA cleavage and polyadenylation factor CLP1 (487 aa).

ATP contacts are provided by residues Glu19, Lys59, and 134-139; that span reads NSGKTT.

It belongs to the Clp1 family. Clp1 subfamily. In terms of assembly, component of a pre-mRNA cleavage factor complex. Interacts directly with PCF11.

The protein localises to the nucleus. Functionally, required for endonucleolytic cleavage during polyadenylation-dependent pre-mRNA 3'-end formation. The chain is mRNA cleavage and polyadenylation factor CLP1 from Laccaria bicolor (strain S238N-H82 / ATCC MYA-4686) (Bicoloured deceiver).